The sequence spans 387 residues: 1-deoxy-D-xylulose 5-phosphate reductoisomerase (387 aa).

NADPH-binding residues include Thr10, Gly11, Ile13, Asn38, and Asn122. Lys123 contacts 1-deoxy-D-xylulose 5-phosphate. Residue Glu124 participates in NADPH binding. Residue Asp148 coordinates Mn(2+). 1-deoxy-D-xylulose 5-phosphate is bound by residues Ser149, Glu150, Ser174, and His197. Glu150 is a binding site for Mn(2+). NADPH is bound at residue Gly203. Positions 210, 215, 216, and 219 each coordinate 1-deoxy-D-xylulose 5-phosphate. A Mn(2+)-binding site is contributed by Glu219.

It belongs to the DXR family. Mg(2+) serves as cofactor. The cofactor is Mn(2+).

It catalyses the reaction 2-C-methyl-D-erythritol 4-phosphate + NADP(+) = 1-deoxy-D-xylulose 5-phosphate + NADPH + H(+). The protein operates within isoprenoid biosynthesis; isopentenyl diphosphate biosynthesis via DXP pathway; isopentenyl diphosphate from 1-deoxy-D-xylulose 5-phosphate: step 1/6. In terms of biological role, catalyzes the NADPH-dependent rearrangement and reduction of 1-deoxy-D-xylulose-5-phosphate (DXP) to 2-C-methyl-D-erythritol 4-phosphate (MEP). The sequence is that of 1-deoxy-D-xylulose 5-phosphate reductoisomerase from Ehrlichia ruminantium (strain Gardel).